The sequence spans 221 residues: High frequency lysogenization protein HflD homolog (221 aa).

Belongs to the HflD family.

It is found in the cytoplasm. The protein localises to the cell inner membrane. The chain is High frequency lysogenization protein HflD homolog from Acidithiobacillus ferrooxidans (strain ATCC 23270 / DSM 14882 / CIP 104768 / NCIMB 8455) (Ferrobacillus ferrooxidans (strain ATCC 23270)).